The sequence spans 624 residues: Ceramide transfer protein (624 aa).

Over residues Met-1–Gly-11 the composition is skewed to polar residues. The tract at residues Met-1–Val-24 is disordered. The region spanning Pro-23–Thr-117 is the PH domain. Phosphoserine is present on Ser-126. Ser-132 bears the Phosphoserine; by PKD mark. Ser-135 is modified (phosphoserine). The stretch at Ile-263 to His-303 forms a coiled coil. The residue at position 315 (Ser-315) is a Phosphoserine. The FFAT signature appears at Glu-321–Glu-327. Tyr-372 bears the Phosphotyrosine mark. Phosphoserine occurs at positions 373, 377, and 380. Positions Asp-389–Ala-618 constitute an START domain. An N-acylsphing-4-enine-binding residues include Glu-472, Gln-493, Asn-530, and Tyr-579.

As to quaternary structure, interacts with VAPA and VAPB. Interaction with VAPB is less efficient than with VAPA. Interacts (via FFAT motif) with the MOSPD2 (via MSP domain). In terms of processing, phosphorylation on Ser-132 decreases the affinity toward phosphatidylinositol 4-phosphate at Golgi membranes and reduces ceramide transfer activity. Inactivated by hyperphosphorylation of serine residues by CSNK1G2/CK1 that triggers dissociation from the Golgi complex, thus down-regulating ER-to-Golgi transport of ceramide and sphingomyelin synthesis.

It localises to the cytoplasm. The protein resides in the golgi apparatus. Its subcellular location is the endoplasmic reticulum. It catalyses the reaction N-hexadecanoylsphing-4-enine(in) = N-hexadecanoylsphing-4-enine(out). Its function is as follows. Shelters ceramides and diacylglycerol lipids inside its START domain and mediates the intracellular trafficking of ceramides and diacylglycerol lipids in a non-vesicular manner. This chain is Ceramide transfer protein (CERT1), found in Pongo abelii (Sumatran orangutan).